Reading from the N-terminus, the 127-residue chain is Fluoride-specific ion channel FluC (127 aa).

The next 4 membrane-spanning stretches (helical) occupy residues 2–22, 35–55, 68–88, and 104–124; these read LSSL…RWAI, LGTL…IAIF, LITT…LEVV, and LLNL…VVWI. The Na(+) site is built by G75 and T78.

The protein belongs to the fluoride channel Fluc/FEX (TC 1.A.43) family.

It localises to the cell inner membrane. The enzyme catalyses fluoride(in) = fluoride(out). With respect to regulation, na(+) is not transported, but it plays an essential structural role and its presence is essential for fluoride channel function. Functionally, fluoride-specific ion channel. Important for reducing fluoride concentration in the cell, thus reducing its toxicity. The protein is Fluoride-specific ion channel FluC of Serratia proteamaculans (strain 568).